Consider the following 452-residue polypeptide: Chaperone SurA (452 aa).

The signal sequence occupies residues methionine 1–alanine 28. PpiC domains are found at residues glutamine 186 to aspartate 288 and isoleucine 302 to serine 400.

Its subcellular location is the periplasm. It catalyses the reaction [protein]-peptidylproline (omega=180) = [protein]-peptidylproline (omega=0). In terms of biological role, chaperone involved in the correct folding and assembly of outer membrane proteins. Recognizes specific patterns of aromatic residues and the orientation of their side chains, which are found more frequently in integral outer membrane proteins. May act in both early periplasmic and late outer membrane-associated steps of protein maturation. The polypeptide is Chaperone SurA (Burkholderia lata (strain ATCC 17760 / DSM 23089 / LMG 22485 / NCIMB 9086 / R18194 / 383)).